The primary structure comprises 182 residues: Lipid A acyltransferase PagP (182 aa).

Residues 1 to 21 form the signal peptide; it reads MTQYFRSLAFFLLPVPATAMA. Cys22 is lipidated: N-palmitoyl cysteine. Cys22 is lipidated: S-diacylglycerol cysteine. Catalysis depends on residues His55, Asp98, and Ser99.

It belongs to the lipid A palmitoyltransferase family. In terms of assembly, homodimer.

The protein localises to the cell outer membrane. It catalyses the reaction a lipid A + a 1,2-diacyl-sn-glycero-3-phosphocholine = a hepta-acyl lipid A + a 2-acyl-sn-glycero-3-phosphocholine. It carries out the reaction a lipid IVA + a 1,2-diacyl-sn-glycero-3-phosphocholine = a lipid IVB + a 2-acyl-sn-glycero-3-phosphocholine. The enzyme catalyses a lipid IIA + a 1,2-diacyl-sn-glycero-3-phosphocholine = a lipid IIB + a 2-acyl-sn-glycero-3-phosphocholine. In terms of biological role, transfers a fatty acid residue from the sn-1 position of a phospholipid to the N-linked hydroxyfatty acid chain on the proximal unit of lipid A or its precursors. The sequence is that of Lipid A acyltransferase PagP from Bordetella pertussis (strain CS).